Consider the following 735-residue polypeptide: 2-5A-dependent ribonuclease (735 aa).

The interval 1–21 (METPDYNTPQGGTPSAGSQRT) is disordered. ANK repeat units lie at residues 24-53 (EDDS…DANA), 58-87 (WGWT…DPHR), 91-120 (NGAT…DVNE), 124-153 (NGFT…NVNL), 167-197 (GGAT…EVDA), 201-234 (MGRN…DVNV), 238-268 (RGKT…NIDA), 272-301 (EGKT…DKCD), and 303-328 (LVWI…NPDT). A binding to TMEV Leader protein region spans residues 26 to 51 (DSSLIKAVQKGDVVRVQQLLEKGADA). 2-5A binding (P-loop) stretches follow at residues 229–242 (GADV…GKTP) and 253–275 (GLVQ…EGKT). The Protein kinase domain occupies 364 to 584 (IHDDYKIAGT…LVDLLGHPFF (221 aa)). The C6-type zinc-finger motif lies at 401-436 (CKEVSCLRDCGDHSNLVAFYGREDDKGCLYVCVSLC). The KEN domain maps to 587-722 (WENRYRTLRN…KHFPQPPPRL (136 aa)). The tract at residues 714 to 735 (HFPQPPPRLSVPEAVGPGGIQS) is disordered.

Belongs to the protein kinase superfamily. (Microbial infection) Interacts (via N-terminus) with TMEV leader protein; this interaction prevents RNASEL activation by its substrate 2'-5' oligoadenylates. In terms of assembly, monomer (inactive form) or homodimer. Interacts with ABCE1; this interaction inhibits the RNASEL. Requires Mn(2+) as cofactor. Mg(2+) is required as a cofactor. In terms of tissue distribution, expressed in spleen, thymus, lung, testis, kidney, liver and heart.

Its subcellular location is the cytoplasm. The protein resides in the mitochondrion. Its activity is regulated as follows. After binding to 2-5A (5'-phosphorylated 2',5'-linked oligoadenylates) the homodimerization and subsequent activation occurs. Inhibited by RNASEL inhibitor ABCE1/RLI, a cytoplasmic member of the ATP-binding cassette (ABC) transporter family. In terms of biological role, endoribonuclease that functions in the interferon (IFN) antiviral response. In INF treated and virus infected cells, RNASEL probably mediates its antiviral effects through a combination of direct cleavage of single-stranded viral RNAs, inhibition of protein synthesis through the degradation of rRNA, induction of apoptosis, and induction of other antiviral genes. RNASEL mediated apoptosis is the result of a JNK-dependent stress-response pathway leading to cytochrome c release from mitochondria and caspase-dependent apoptosis. Therefore, activation of RNASEL could lead to elimination of virus infected cells under some circumstances. In the crosstalk between autophagy and apoptosis proposed to induce autophagy as an early stress response to small double-stranded RNA and at later stages of prolonged stress to activate caspase-dependent proteolytic cleavage of BECN1 to terminate autophagy and promote apoptosis. Might play a central role in the regulation of mRNA turnover. Cleaves 3' of UpNp dimers, with preference for UU and UA sequences, to sets of discrete products ranging from between 4 and 22 nucleotides in length. This chain is 2-5A-dependent ribonuclease (Rnasel), found in Mus musculus (Mouse).